The primary structure comprises 310 residues: DDRGK domain-containing protein 1 (310 aa).

A helical transmembrane segment spans residues 1–21 (MAAIIYLAIAAVASILLFVAV). The Cytoplasmic portion of the chain corresponds to 22–310 (KLLSTDTKTE…DSPAEISVNA (289 aa)). 2 disordered regions span residues 38–85 (VGEL…DEYQ) and 110–162 (KAEK…LKEE). Positions 52–70 (PRARARRGLRNKTNRSKTQ) are enriched in basic residues. Residues 76 to 85 (DYDDYDDEYQ) show a composition bias toward acidic residues.

Belongs to the DDRGK1 family.

The protein resides in the endoplasmic reticulum membrane. Functionally, substrate adapter for ufmylation, the covalent attachment of the ubiquitin-like modifier UFM1 to substrate proteins. The sequence is that of DDRGK domain-containing protein 1 from Trichoplax adhaerens (Trichoplax reptans).